The primary structure comprises 98 residues: Acylphosphatase (98 aa).

The 87-residue stretch at 12-98 (TYYVRVRGVV…ERRFDRFQQQ (87 aa)) folds into the Acylphosphatase-like domain. Active-site residues include R27 and N45.

This sequence belongs to the acylphosphatase family.

It catalyses the reaction an acyl phosphate + H2O = a carboxylate + phosphate + H(+). In Burkholderia ambifaria (strain ATCC BAA-244 / DSM 16087 / CCUG 44356 / LMG 19182 / AMMD) (Burkholderia cepacia (strain AMMD)), this protein is Acylphosphatase (acyP).